The following is a 29-amino-acid chain: Cytochrome b6-f complex subunit 8 (29 aa).

The chain crosses the membrane as a helical span at residues 3–23 (IVSFAWAALMVVFTFSLSLVV).

Belongs to the PetN family. As to quaternary structure, the 4 large subunits of the cytochrome b6-f complex are cytochrome b6, subunit IV (17 kDa polypeptide, PetD), cytochrome f and the Rieske protein, while the 4 small subunits are PetG, PetL, PetM and PetN. The complex functions as a dimer.

It is found in the plastid. The protein localises to the chloroplast thylakoid membrane. Its function is as follows. Component of the cytochrome b6-f complex, which mediates electron transfer between photosystem II (PSII) and photosystem I (PSI), cyclic electron flow around PSI, and state transitions. The polypeptide is Cytochrome b6-f complex subunit 8 (Phalaenopsis aphrodite subsp. formosana (Moth orchid)).